Reading from the N-terminus, the 91-residue chain is Small ribosomal subunit protein eS24 (91 aa).

Positions 51 to 91 (QRRKDAAAHKEAYNAMPEAERRHLNSEKYANRKAEVSYKHR) are disordered.

The protein belongs to the eukaryotic ribosomal protein eS24 family.

The chain is Small ribosomal subunit protein eS24 from Caenorhabditis elegans.